The sequence spans 62 residues: Large ribosomal subunit protein uL29 (62 aa).

The protein belongs to the universal ribosomal protein uL29 family.

In Ruthia magnifica subsp. Calyptogena magnifica, this protein is Large ribosomal subunit protein uL29.